An 89-amino-acid chain; its full sequence is Signal recognition particle 19 kDa protein (89 aa).

This sequence belongs to the SRP19 family. As to quaternary structure, part of the signal recognition particle protein translocation system, which is composed of SRP and FtsY. Archaeal SRP consists of a 7S RNA molecule of 300 nucleotides and two protein subunits: SRP54 and SRP19.

The protein localises to the cytoplasm. Its function is as follows. Involved in targeting and insertion of nascent membrane proteins into the cytoplasmic membrane. Binds directly to 7S RNA and mediates binding of the 54 kDa subunit of the SRP. The chain is Signal recognition particle 19 kDa protein from Methanococcus vannielii (strain ATCC 35089 / DSM 1224 / JCM 13029 / OCM 148 / SB).